The following is a 750-amino-acid chain: Photosystem I P700 chlorophyll a apoprotein A1 (750 aa).

8 helical membrane passes run 70-93, 156-179, 195-219, 291-309, 346-369, 385-411, 433-455, and 531-549; these read VFSAHFGQLSIIFLWLSGMYFHGA, LYCTAIGALVFAALMLFAGWFHYH, LNHHLAGLLGLGSLSWAGHQIHVSL, IAHHHLAIAILFLIAGHMY, WHAQLSLNLAMLGSTTIVVAHHMY, LSLFTHHMWIGGFLIVGAAAHAAIFMV, AIISHLNWVCIFLGFHSFGLYIH, and FLVHHIHAFTIHVTVLILL. [4Fe-4S] cluster is bound by residues Cys-573 and Cys-582. 2 helical membrane-spanning segments follow: residues 589-610 and 664-686; these read HVFLGLFWMYNAISVVIFHFSW and LSAYGLFFLGAHFVWAFSLMFLF. Residue His-675 participates in chlorophyll a' binding. Residues Met-683 and Tyr-691 each contribute to the chlorophyll a site. Trp-692 contacts phylloquinone. Residues 724-744 traverse the membrane as a helical segment; it reads AVGVTHYLLGGIATTWAFFLA.

Belongs to the PsaA/PsaB family. The PsaA/B heterodimer binds the P700 chlorophyll special pair and subsequent electron acceptors. PSI consists of a core antenna complex that captures photons, and an electron transfer chain that converts photonic excitation into a charge separation. The eukaryotic PSI reaction center is composed of at least 11 subunits. P700 is a chlorophyll a/chlorophyll a' dimer, A0 is one or more chlorophyll a, A1 is one or both phylloquinones and FX is a shared 4Fe-4S iron-sulfur center. is required as a cofactor.

The protein localises to the plastid. Its subcellular location is the chloroplast thylakoid membrane. The catalysed reaction is reduced [plastocyanin] + hnu + oxidized [2Fe-2S]-[ferredoxin] = oxidized [plastocyanin] + reduced [2Fe-2S]-[ferredoxin]. Its function is as follows. PsaA and PsaB bind P700, the primary electron donor of photosystem I (PSI), as well as the electron acceptors A0, A1 and FX. PSI is a plastocyanin-ferredoxin oxidoreductase, converting photonic excitation into a charge separation, which transfers an electron from the donor P700 chlorophyll pair to the spectroscopically characterized acceptors A0, A1, FX, FA and FB in turn. Oxidized P700 is reduced on the lumenal side of the thylakoid membrane by plastocyanin. In Hordeum vulgare (Barley), this protein is Photosystem I P700 chlorophyll a apoprotein A1.